A 307-amino-acid polypeptide reads, in one-letter code: NmrA-like family domain-containing oxidoreductase flvB (307 aa).

Residues 4–9, 32–36, 53–54, 74–76, and 148–151 contribute to the NADP(+) site; these read LITGAT, SSSSP, DY, STN, and YVEG.

Belongs to the NmrA-type oxidoreductase family.

It carries out the reaction (2S)-5,5-dimethyl-2,3,4,5-tetrahydropyridine-2,6-dicarboxylate + NADPH + 2 H(+) = (6S)-3,3-dimethylpiperidine-2,6-dicarboxylate + NADP(+). It catalyses the reaction (2S)-5,5-dimethyl-2,3,4,5-tetrahydropyridine-2,6-dicarboxylate + NADH + 2 H(+) = (6S)-3,3-dimethylpiperidine-2,6-dicarboxylate + NAD(+). The protein operates within secondary metabolite biosynthesis; terpenoid biosynthesis. NmrA-like family domain-containing oxidoreductase; part of the gene cluster that mediates the biosynthesis of flavunoidine, an alkaloidal terpenoid with a tetracyclic cage-like core connected to dimethylcadaverine via a C-N bond and acylated with 5,5-dimethyl-L-pipecolate. The tetracyclic core is synthesized by the terpene cyclase flvE and the cytochrome P450 monooxygenase flvD. The terpene cyclase flvE catalyzes the cyclization of farnesyl pyrophosphate (FPP) to form (1R,4R,5S)-(+)-acoradiene and the cytochrome P450 monooxygenase flvD is then responsible for oxidative conversion of (1R,4R,5S)-(+)-acoradiene into the tetracyclic cage present in the final product flavunoidine. In parallel, the N-methyltransferase flvH dimethylates L-lysine to give N,N-dimethyl-L-Lysin which is decarboxylated by flvG to afford dimethylcadaverine. The terpene cyclase-like protein flvF is the enzyme that attaches the dimethylcadaverine precusor at the C-7 of the tetracyclic cage to yield pre-flavunoidine. The cytochrome monooxygenase flvC hydroxylates the C-10 position of pre-flavunoidine whereas the NRPS flvI acylates the terpenoid core at the hydroxylated C-10 with dimethylpipecolate to yield final flavunoidine. The bifunctional enzyme flvA and the dehydrogenase flvB are responsible for the synthesis of the dimethylpipecolate precursor. The PLP-dependent lyase domain of flvA might use L-O-acetyl-homoserine and alpha-keto-isovalerate to form an intermediary ketone that can cyclize intramolecularly to yield an imine. The imine can be reduced by flvB to yield the 6-carboxylated pipecolate. The C-terminal alpha-KG-dependent oxygenase domain of flvA is then proposed to catalyze the decarboxylation to yield dimethylpipecolate. The chain is NmrA-like family domain-containing oxidoreductase flvB from Aspergillus flavus (strain ATCC 200026 / FGSC A1120 / IAM 13836 / NRRL 3357 / JCM 12722 / SRRC 167).